The primary structure comprises 539 residues: Phosphoenolpyruvate carboxykinase (ATP) (539 aa).

Residues arginine 64, tyrosine 206, and lysine 212 each coordinate substrate. ATP is bound by residues lysine 212, histidine 231, and 247–255; that span reads GLSGTGKTT. Positions 212 and 231 each coordinate Mn(2+). Aspartate 268 serves as a coordination point for Mn(2+). Residues glutamate 296, arginine 332, 448–449, and threonine 454 each bind ATP; that span reads RI. Arginine 332 contributes to the substrate binding site.

This sequence belongs to the phosphoenolpyruvate carboxykinase (ATP) family. Monomer. It depends on Mn(2+) as a cofactor.

The protein resides in the cytoplasm. The enzyme catalyses oxaloacetate + ATP = phosphoenolpyruvate + ADP + CO2. It participates in carbohydrate biosynthesis; gluconeogenesis. In terms of biological role, involved in the gluconeogenesis. Catalyzes the conversion of oxaloacetate (OAA) to phosphoenolpyruvate (PEP) through direct phosphoryl transfer between the nucleoside triphosphate and OAA. This chain is Phosphoenolpyruvate carboxykinase (ATP), found in Yersinia pseudotuberculosis serotype IB (strain PB1/+).